A 1183-amino-acid chain; its full sequence is DNA-directed RNA polymerase subunit beta (1183 aa).

The protein belongs to the RNA polymerase beta chain family. In terms of assembly, the RNAP catalytic core consists of 2 alpha, 1 beta, 1 beta' and 1 omega subunit. When a sigma factor is associated with the core the holoenzyme is formed, which can initiate transcription.

It carries out the reaction RNA(n) + a ribonucleoside 5'-triphosphate = RNA(n+1) + diphosphate. Functionally, DNA-dependent RNA polymerase catalyzes the transcription of DNA into RNA using the four ribonucleoside triphosphates as substrates. This chain is DNA-directed RNA polymerase subunit beta, found in Staphylococcus aureus (strain Mu3 / ATCC 700698).